Here is a 693-residue protein sequence, read N- to C-terminus: Protein-glutamine gamma-glutamyltransferase E (693 aa).

The residue at position 2 (Ala-2) is an N-acetylalanine. Phosphotyrosine is present on Tyr-111. Thr-112 bears the Phosphothreonine mark. Ala-222, Asn-225, Asn-227, Asp-228, and Asn-230 together coordinate Ca(2+). Residue Cys-273 is part of the active site. Residues Asp-302, Asp-304, Asn-306, Ser-308, and Asp-325 each coordinate Ca(2+). Residues His-331 and Asp-354 contribute to the active site. Ca(2+) is bound by residues Asn-394, Ser-416, Glu-444, and Glu-449.

Belongs to the transglutaminase superfamily. Transglutaminase family. In terms of assembly, consists of two polypeptide chains, which are synthesized as a precursor form of a single polypeptide. Requires Ca(2+) as cofactor. In terms of processing, activated by proteolytic processing. In vitro activation is commonly achieved by cleavage with dispase, a neutral bacterial protease. Dispase cleavage site was proposed to lie between Ser-470 and Ser-471 or between Pro-465 and Phe-466. Physiological activation may be catalyzed by CTSL and, to a lesser extent, by CTSS, but not by CTSB, CTSD nor CTSV.

Its subcellular location is the cytoplasm. It catalyses the reaction L-glutaminyl-[protein] + L-lysyl-[protein] = [protein]-L-lysyl-N(6)-5-L-glutamyl-[protein] + NH4(+). Its function is as follows. Catalyzes the calcium-dependent formation of isopeptide cross-links between glutamine and lysine residues in various proteins, as well as the conjugation of polyamines to proteins. Involved in the formation of the cornified envelope (CE), a specialized component consisting of covalent cross-links of proteins beneath the plasma membrane of terminally differentiated keratinocytes. Catalyzes small proline-rich proteins (SPRR1 and SPRR2) and LOR cross-linking to form small interchain oligomers, which are further cross-linked by TGM1 onto the growing CE scaffold. In hair follicles, involved in cross-linking structural proteins to hardening the inner root sheath. The sequence is that of Protein-glutamine gamma-glutamyltransferase E (TGM3) from Homo sapiens (Human).